The chain runs to 205 residues: Glycerol-3-phosphate acyltransferase (205 aa).

Topologically, residues 1–3 (MSA) are periplasmic. The chain crosses the membrane as a helical span at residues 4–24 (IAPGMILFAYLCGSISSAILV). Topologically, residues 25 to 52 (CRLCGLPDPRTSGSGNPGATNVLRMGGK) are cytoplasmic. The helical transmembrane segment at 53–73 (GAALAVLIFDVLKGMLPVWGA) threads the bilayer. The Periplasmic portion of the chain corresponds to 74 to 80 (YELGVSP). A helical membrane pass occupies residues 81-101 (FWLGLIAIAACLGHIWPIFFG). The Cytoplasmic portion of the chain corresponds to 102-111 (FKGGKGVATA). A helical membrane pass occupies residues 112–132 (FGAIAPIGWDLTGVMAGTWLL). The Periplasmic portion of the chain corresponds to 133–137 (TVLLS). Residues 138 to 158 (GYSSLGAIVSALIAPFYVWWF) form a helical membrane-spanning segment. At 159 to 205 (KPQFTFPVSMLSCLILLRHHDNIQRLWRRQETKIWTKLKRKREKDPE) the chain is on the cytoplasmic side.

The protein belongs to the PlsY family. As to quaternary structure, probably interacts with PlsX.

The protein localises to the cell inner membrane. It catalyses the reaction sn-glycerol 3-phosphate + an acyl-CoA = a 1-acyl-sn-glycero-3-phosphate + CoA. The enzyme catalyses a fatty acyl-[ACP] + sn-glycerol 3-phosphate = a 1-acyl-sn-glycero-3-phosphate + holo-[ACP]. The protein operates within lipid metabolism; phospholipid metabolism. In terms of biological role, catalyzes the transfer of an acyl group from acyl-ACP to glycerol-3-phosphate (G3P) to form lysophosphatidic acid (LPA). This enzyme can also utilize acyl-CoA as fatty acyl donor, but not acyl-PO(4). This is Glycerol-3-phosphate acyltransferase from Escherichia fergusonii (strain ATCC 35469 / DSM 13698 / CCUG 18766 / IAM 14443 / JCM 21226 / LMG 7866 / NBRC 102419 / NCTC 12128 / CDC 0568-73).